The sequence spans 858 residues: ATP-dependent DNA helicase Q-like SIM (858 aa).

The 43-residue stretch at 2–44 folds into the UBA domain; it reads DLSSDQLVMKIVEMGFEKLDALEAVKAVGGKSCDDAVEYILKG. In terms of domain architecture, Helicase ATP-binding spans 177–353; that stretch reads LSTWVAHKDC…LESLHLSKET (177 aa). ATP is bound at residue 190 to 197; that stretch reads AATGSGKS. The short motif at 288 to 291 is the DEAH box element; it reads DEAH. The disordered stretch occupies residues 402–450; sequence LAVISRESEEQTDFGSHDSENIHETDYDEDEEDQENSLAKKNSSNGKEL. Residues 416 to 426 are compositionally biased toward basic and acidic residues; that stretch reads GSHDSENIHET. The span at 427–436 shows a compositional bias: acidic residues; sequence DYDEDEEDQE. Over residues 437-448 the composition is skewed to polar residues; the sequence is NSLAKKNSSNGK. The Helicase C-terminal domain occupies 491–627; sequence EKQKDLEGLT…QTEQAYKMLS (137 aa). A disordered region spans residues 822 to 858; sequence RQRLERRERKPRRERKPRKKRTRGRSSTKLHPWRSKE. Positions 830–858 are enriched in basic residues; the sequence is RKPRRERKPRKKRTRGRSSTKLHPWRSKE.

This sequence belongs to the helicase family. RecQ subfamily. Requires Mg(2+) as cofactor. Mn(2+) serves as cofactor. Mostly expressed in roots and seedlings, and, to a lower extent, in leaves, shoots, shoot apical mersitem, inflorescences, flowers, siliques and seeds.

Its subcellular location is the nucleus. It carries out the reaction Couples ATP hydrolysis with the unwinding of duplex DNA by translocating in the 3'-5' direction.. The enzyme catalyses ATP + H2O = ADP + phosphate + H(+). In terms of biological role, plant specific, probable 3'-5' DNA helicase that may play a role in the repair of DNA. This chain is ATP-dependent DNA helicase Q-like SIM (RECQSIM), found in Arabidopsis thaliana (Mouse-ear cress).